The sequence spans 394 residues: Succinate--CoA ligase [ADP-forming] subunit beta (394 aa).

An ATP-grasp domain is found at 9–243 (KDILAGFGIA…YSQLNPLEIA (235 aa)). ATP is bound by residues Lys-45, 52 to 54 (GRG), Glu-98, Val-101, and Glu-106. Residues Asn-198 and Asp-212 each contribute to the Mg(2+) site. Substrate contacts are provided by residues Asn-263 and 320-322 (GIM).

The protein belongs to the succinate/malate CoA ligase beta subunit family. As to quaternary structure, heterotetramer of two alpha and two beta subunits. Requires Mg(2+) as cofactor.

It carries out the reaction succinate + ATP + CoA = succinyl-CoA + ADP + phosphate. It catalyses the reaction GTP + succinate + CoA = succinyl-CoA + GDP + phosphate. The protein operates within carbohydrate metabolism; tricarboxylic acid cycle; succinate from succinyl-CoA (ligase route): step 1/1. Its function is as follows. Succinyl-CoA synthetase functions in the citric acid cycle (TCA), coupling the hydrolysis of succinyl-CoA to the synthesis of either ATP or GTP and thus represents the only step of substrate-level phosphorylation in the TCA. The beta subunit provides nucleotide specificity of the enzyme and binds the substrate succinate, while the binding sites for coenzyme A and phosphate are found in the alpha subunit. The chain is Succinate--CoA ligase [ADP-forming] subunit beta from Pelobacter propionicus (strain DSM 2379 / NBRC 103807 / OttBd1).